Reading from the N-terminus, the 162-residue chain is Ribosome maturation factor RimP (162 aa).

The protein belongs to the RimP family.

The protein resides in the cytoplasm. Functionally, required for maturation of 30S ribosomal subunits. This is Ribosome maturation factor RimP from Cupriavidus taiwanensis (strain DSM 17343 / BCRC 17206 / CCUG 44338 / CIP 107171 / LMG 19424 / R1) (Ralstonia taiwanensis (strain LMG 19424)).